A 132-amino-acid chain; its full sequence is MVMTDPIADFLTRIRNANQAKHEVLEVPASNIKKGIADILKREGFVKNVEVIEDDKQGIIRVFLKYGQNGERVITNLKRISKPGLRVYTKHEDMPKVLNGLGIAIVSTSEGLLTDKEARQKNVGGEVLAYIW.

It belongs to the universal ribosomal protein uS8 family. In terms of assembly, part of the 30S ribosomal subunit. Contacts proteins S5 and S12.

In terms of biological role, one of the primary rRNA binding proteins, it binds directly to 16S rRNA central domain where it helps coordinate assembly of the platform of the 30S subunit. In Streptococcus agalactiae serotype Ia (strain ATCC 27591 / A909 / CDC SS700), this protein is Small ribosomal subunit protein uS8.